The chain runs to 334 residues: L-lactate dehydrogenase B chain (334 aa).

Ala-2 carries the N-acetylalanine modification. N6-acetyllysine is present on Lys-7. Phosphoserine is present on residues Ser-11 and Ser-44. Residues 30–58 (GQVG…LEDK) and Arg-100 contribute to the NAD(+) site. Lys-58 bears the N6-acetyllysine mark. Arg-107 contributes to the substrate binding site. N6-acetyllysine is present on Lys-119. Residue Asn-139 coordinates NAD(+). 2 residues coordinate substrate: Asn-139 and Arg-170. His-194 acts as the Proton acceptor in catalysis. Tyr-240 bears the Phosphotyrosine mark. Thr-249 lines the substrate pocket. Lys-329 is modified (N6-acetyllysine).

It belongs to the LDH/MDH superfamily. LDH family. In terms of assembly, homotetramer. Interacts with PTEN upstream reading frame protein MP31; the interaction leads to inhibition of mitochondrial lactate dehydrogenase activity, preventing conversion of lactate to pyruvate in mitochondria.

The protein resides in the cytoplasm. Its subcellular location is the mitochondrion inner membrane. It catalyses the reaction (S)-lactate + NAD(+) = pyruvate + NADH + H(+). It functions in the pathway fermentation; pyruvate fermentation to lactate; (S)-lactate from pyruvate: step 1/1. Functionally, interconverts simultaneously and stereospecifically pyruvate and lactate with concomitant interconversion of NADH and NAD(+). The sequence is that of L-lactate dehydrogenase B chain (Ldhb) from Mus musculus (Mouse).